We begin with the raw amino-acid sequence, 97 residues long: Large ribosomal subunit protein eL21 (97 aa).

This sequence belongs to the eukaryotic ribosomal protein eL21 family.

The chain is Large ribosomal subunit protein eL21 from Methanococcus aeolicus (strain ATCC BAA-1280 / DSM 17508 / OCM 812 / Nankai-3).